We begin with the raw amino-acid sequence, 470 residues long: Na(+)/H(+) antiporter NhaA 2 (470 aa).

A run of 11 helical transmembrane segments spans residues 34–54 (FLHI…IALL), 85–105 (LEWV…GMEI), 121–141 (ALPA…YLLL), 150–170 (GWGV…TLLG), 179–199 (VLLL…IAVF), 202–222 (SGVA…VFAM), 241–261 (WAGV…IGLI), 317–337 (SLIA…FALA), 357–377 (LATA…ACWL), 395–415 (LLVL…IAQL), and 423–443 (LAAG…VALV).

The protein belongs to the NhaA Na(+)/H(+) (TC 2.A.33) antiporter family.

It is found in the cell inner membrane. The enzyme catalyses Na(+)(in) + 2 H(+)(out) = Na(+)(out) + 2 H(+)(in). Functionally, na(+)/H(+) antiporter that extrudes sodium in exchange for external protons. This is Na(+)/H(+) antiporter NhaA 2 from Myxococcus xanthus (strain DK1622).